The primary structure comprises 532 residues: Tyrosine-protein kinase Src-1 (532 aa).

The segment at 1–52 is disordered; sequence MGATKSKPREGGPRSRSLDIVEGSHQPFTSLSASQTPNKSLDSHRPPAQPFG. The N-myristoyl glycine moiety is linked to residue Gly-2. Residues 7–19 show a composition bias toward basic and acidic residues; sequence KPREGGPRSRSLD. The segment covering 26–40 has biased composition (polar residues); the sequence is QPFTSLSASQTPNKS. In terms of domain architecture, SH3 spans 80–141; it reads GGVTTFVALY…PSNYVAPSDS (62 aa). An SH2 domain is found at 147–244; it reads WYLGKITRRE…GLCHRLTTVC (98 aa). Residues 266-519 enclose the Protein kinase domain; the sequence is LRLELKLGQG…YLQAFLEDYF (254 aa). ATP-binding positions include 272–280 and Lys-294; that span reads LGQGCFGEV. Residue Asp-385 is the Proton acceptor of the active site. Position 415 is a phosphotyrosine; by autocatalysis (Tyr-415).

The protein belongs to the protein kinase superfamily. Tyr protein kinase family. SRC subfamily.

The protein localises to the cell membrane. The enzyme catalyses L-tyrosyl-[protein] + ATP = O-phospho-L-tyrosyl-[protein] + ADP + H(+). This Xenopus laevis (African clawed frog) protein is Tyrosine-protein kinase Src-1 (src-a).